Here is a 236-residue protein sequence, read N- to C-terminus: MTKRYWNIDLEEMMRAGVHFGHGTRKWNPRMAPYISAKRKGIHIINLTRTARFLSEACDLVFDAASRGKQFLIVGTKNKAADLVSRAAIRARCHYVNKKWLGGMLTNWSTTEKRLHKFRDLRTEQKTEGFNRLPKRDAAVLKRQLSRLETYLGGIKYMTGLPDIVIIIDQQEEYTALRECITLGIPTISLIDTNCNPDLADISIPANDDAIASIRFILNKLVFAICEGRSSYIQNY.

The protein belongs to the universal ribosomal protein uS2 family.

It is found in the plastid. The protein resides in the chloroplast. This Draba nemorosa (Woodland whitlowgrass) protein is Small ribosomal subunit protein uS2c (rps2).